A 193-amino-acid chain; its full sequence is Ribonuclease HII (193 aa).

Positions 15–193 (YIVAGIDEAG…PYHRKSFKCC (179 aa)) constitute an RNase H type-2 domain. Aspartate 21, glutamate 22, and aspartate 112 together coordinate a divalent metal cation.

This sequence belongs to the RNase HII family. Mn(2+) serves as cofactor. Requires Mg(2+) as cofactor.

It is found in the cytoplasm. It carries out the reaction Endonucleolytic cleavage to 5'-phosphomonoester.. Functionally, endonuclease that specifically degrades the RNA of RNA-DNA hybrids. The chain is Ribonuclease HII from Rickettsia akari (strain Hartford).